The following is a 1141-amino-acid chain: PR domain zinc finger protein 15 (1141 aa).

One can recognise an SET domain in the interval 49 to 159 (PNLEIRRLED…PGTELRVWYA (111 aa)). A C2H2-type 1 zinc finger spans residues 197–219 (WACKVCSATFLELQLLNEHLLGH). Positions 224-283 (KSLPPGSQSEAAAPEKEQDTPRGEPPAVPESENVATKEQKKKPRRGRKPKVSKAEQPLVI) are disordered. The span at 236–245 (APEKEQDTPR) shows a compositional bias: basic and acidic residues. Residues 262 to 274 (QKKKPRRGRKPKV) show a composition bias toward basic residues. C2H2-type zinc fingers lie at residues 372-394 (YQCNICSKIFQNSSNLSRHVRSH), 399-422 (FKCEECAKLFSRKESLKQHVSYKH), 460-482 (FQCEMCFRFFSTNSNLSKHKKKH), and 487-509 (FACEVCSKMFYRKDVMLDHQRRH). Lys-517 is covalently cross-linked (Glycyl lysine isopeptide (Lys-Gly) (interchain with G-Cter in SUMO2)). 2 consecutive C2H2-type zinc fingers follow at residues 536–558 (SGCPVCGKVFSCRSNMNKHLLTH) and 563–585 (YTCEICGRKFFRVDVLRDHIHVH). The tract at residues 604 to 623 (IGISSEENDDNSDESADSEP) is disordered. Residues 609 to 620 (EENDDNSDESAD) show a composition bias toward acidic residues. 9 consecutive C2H2-type zinc fingers follow at residues 626 to 649 (YSCKRCQLTFGRGKEYLKHIMEVH), 654 to 676 (YGCSICNRRFALKATYHAHMVIH), 690 to 712 (HPCEICGRIFNSIGNLERHKLIH), 718 to 740 (HACEQCGKSFARKDMLKEHMRVH), 746 to 768 (YLCAECGKGMKTKHALRHHMKLH), 774 to 796 (YECKECHRRFAQKVNMLKHCKRH), 802 to 824 (FMCELCGKTFSERNTMETHKLIH), 830 to 853 (WTCSVCDKKYVTEYMLQKHVQLTH), and 859 to 882 (QSCQLCGTKVSTRASMSRHMRRKH). Disordered stretches follow at residues 922–973 (AEGK…DETN) and 1108–1141 (QTDVLPPSQPQAPPQQAAQPQVQAEQQQQQMYSY). A compositionally biased stretch (basic residues) spans 927–938 (GKAAKRSHKRKQ). The span at 1121-1141 (PQQAAQPQVQAEQQQQQMYSY) shows a compositional bias: low complexity.

This sequence belongs to the class V-like SAM-binding methyltransferase superfamily. As to expression, detected in all tissues examined.

The protein localises to the nucleus. Functionally, sequence-specific DNA-binding transcriptional regulator. Plays a role as a molecular node in a transcriptional network regulating embryonic development and cell fate decision. Stimulates the expression of upstream key transcriptional activators and repressors of the Wnt/beta-catenin and MAPK/ERK pathways, respectively, that are essential for naive pluripotency and self-renewal maintenance of embryonic stem cells (ESCs). Specifically promotes SPRY1 and RSPO1 transcription activation through recognition and direct binding of a specific DNA sequence in their promoter regions. Involved in early embryo development. Also plays a role in induced pluripotent stem cells (iPSCs) reprogramming. The chain is PR domain zinc finger protein 15 from Homo sapiens (Human).